A 176-amino-acid chain; its full sequence is ATP-dependent protease subunit HslV (176 aa).

Residue T2 is part of the active site. Na(+)-binding residues include G157, C160, and T163.

The protein belongs to the peptidase T1B family. HslV subfamily. A double ring-shaped homohexamer of HslV is capped on each side by a ring-shaped HslU homohexamer. The assembly of the HslU/HslV complex is dependent on binding of ATP.

Its subcellular location is the cytoplasm. It catalyses the reaction ATP-dependent cleavage of peptide bonds with broad specificity.. Its activity is regulated as follows. Allosterically activated by HslU binding. In terms of biological role, protease subunit of a proteasome-like degradation complex believed to be a general protein degrading machinery. The chain is ATP-dependent protease subunit HslV from Proteus mirabilis (strain HI4320).